Reading from the N-terminus, the 283-residue chain is MTNIQTWIDEYHKGSRFGLNGDVLIKQKSQYQEIIVIENEYYGRALMLDGCWMTSLKDEKYYHECLVHPALSSIDEKSNVLIIGGGDGGTVRECVKYAQISKIDLVEIDEEVIKISKKFLKEIGGEAWHDKRLEIHVDDGVKWVKKTRDNYYDVIFIDCSDPSEFSNLLFSDSFYKECKRILTPKGILATQSESPESFKNIHINILKTLKNIFKVSETMYSFVPIYPSGIWSWTFASSEDLNLSKQNYDEILKIEKGCEIWNLNFQNAAFKMMPNKIIKELDS.

One can recognise a PABS domain in the interval 5-238; it reads QTWIDEYHKG…GIWSWTFASS (234 aa). Residue Gln-32 coordinates S-methyl-5'-thioadenosine. Positions 63 and 87 each coordinate spermidine. S-methyl-5'-thioadenosine-binding positions include Glu-107 and 139–140; that span reads DG. Asp-158 serves as the catalytic Proton acceptor. 158–161 lines the spermidine pocket; it reads DCSD.

The protein belongs to the spermidine/spermine synthase family. As to quaternary structure, homodimer or homotetramer.

The protein resides in the cytoplasm. It carries out the reaction S-adenosyl 3-(methylsulfanyl)propylamine + putrescine = S-methyl-5'-thioadenosine + spermidine + H(+). It functions in the pathway amine and polyamine biosynthesis; spermidine biosynthesis; spermidine from putrescine: step 1/1. Its function is as follows. Catalyzes the irreversible transfer of a propylamine group from the amino donor S-adenosylmethioninamine (decarboxy-AdoMet) to putrescine (1,4-diaminobutane) to yield spermidine. This is Polyamine aminopropyltransferase from Prochlorococcus marinus (strain MIT 9301).